A 668-amino-acid polypeptide reads, in one-letter code: Packaging protein UL32 homolog (668 aa).

Positions 1–10 (MNPSTHVSSN) are enriched in polar residues. Positions 1–35 (MNPSTHVSSNGPTTPPHGPHTTFLPPTSPAPSTSS) are disordered. Residues 19–35 (PHTTFLPPTSPAPSTSS) are compositionally biased toward low complexity. Cys200, Cys203, His276, and Cys282 together coordinate Zn(2+). The tract at residues 200-282 (CNLCAIISIC…FHLHFFINRC (83 aa)) is zinc finger 1. Composition is skewed to basic and acidic residues over residues 392-401 (SEREDARMMM) and 410-419 (GEKGGDDPGR). The disordered stretch occupies residues 392–430 (SEREDARMMMEEEEDEEGGEKGGDDPGRHNGGGTSGGFS). Residues Cys459, Cys462, His567, and Cys574 each contribute to the Zn(2+) site. Positions 459-574 (CLLCELMACS…YKHFFCDPQC (116 aa)) are zinc finger 2.

This sequence belongs to the herpesviridae UL32 protein family.

Its subcellular location is the host cytoplasm. The protein resides in the host nucleus. Plays a role in efficient localization of neo-synthesized capsids to nuclear replication compartments, thereby controlling cleavage and packaging of virus genomic DNA. This Homo sapiens (Human) protein is Packaging protein UL32 homolog (UL52).